The sequence spans 365 residues: IgG receptor FcRn large subunit p51 (365 aa).

The signal sequence occupies residues 1–23 (MGVPRPQPWALGLLLFLLPGSLG). The tract at residues 24–110 (AESHLSLLYH…AFKALGGKGP (87 aa)) is alpha-1. Residues 24–297 (AESHLSLLYH…VELESPAKSS (274 aa)) lie on the Extracellular side of the membrane. The tract at residues 111-200 (YTLQGLLGCE…ERGRGNLEWK (90 aa)) is alpha-2. 2 cysteine pairs are disulfide-bonded: C119/C182 and C221/C275. N125 is a glycosylation site (N-linked (GlcNAc...) asparagine). Positions 201-290 (EPPSMRLKAR…GLAQPLRVEL (90 aa)) are alpha-3. The Ig-like C1-type domain occupies 202–289 (PPSMRLKARP…AGLAQPLRVE (88 aa)). The interval 291–297 (ESPAKSS) is connecting peptide. The helical transmembrane segment at 298-321 (VLVVGIVIGVLLLTAAAVGGALLW) threads the bilayer. Topologically, residues 322-365 (RRMRSGLPAPWISLRGDDTGVLLPTPGEAQDADLKDVNVIPATA) are cytoplasmic. Residue S334 is modified to Phosphoserine.

It belongs to the immunoglobulin superfamily. As to quaternary structure, fcRn complex consists of two subunits: p51, and p14 which is equivalent to beta-2-microglobulin. It forms an MHC class I-like heterodimer. Interacts with albumin/ALB; this interaction regulates ALB homeostasis. (Microbial infection) Interacts with Echovirus 6, Echovirus 11 and Echovirus 30 capsid protein VP1. In terms of tissue distribution, expressed in full-term placenta, heart, lung, liver, muscle, kidney, pancreas, and both fetal and adult small intestine.

It is found in the cell membrane. The protein localises to the endosome membrane. In terms of biological role, cell surface receptor that transfers passive humoral immunity from the mother to the newborn. Binds to the Fc region of monomeric immunoglobulin gamma and mediates its selective uptake from milk. IgG in the milk is bound at the apical surface of the intestinal epithelium. The resultant FcRn-IgG complexes are transcytosed across the intestinal epithelium and IgG is released from FcRn into blood or tissue fluids. Throughout life, contributes to effective humoral immunity by recycling IgG and extending its half-life in the circulation. Mechanistically, monomeric IgG binding to FcRn in acidic endosomes of endothelial and hematopoietic cells recycles IgG to the cell surface where it is released into the circulation. In addition of IgG, regulates homeostasis of the other most abundant circulating protein albumin/ALB. Functionally, (Microbial infection) Acts as an uncoating receptor for a panel of echoviruses including Echovirus 5, 6, 7, 9, 11, 13, 25 and 29. The protein is IgG receptor FcRn large subunit p51 (FCGRT) of Homo sapiens (Human).